The chain runs to 420 residues: MFKVPVGLASRTRELMNSVTLNSLNNGKGFNMYLPGILRAFPKPVPSAITSPAIPKYRGESFQFRKLSCISSNYCSTTHQFLSSLKSSTSRLVGKRAFHSSRRAEIKFIFSSKSPKNGNKPFVKVYKVSPFFIIFATASIFTFILTSTIVVIPLIFHFFFPLLIMFFFFKQFKKWQKNIFYKDVLTSLPKTKLKITLPTMRSLQLQPMVQSWKEISSRMGIPNEFAKGLNVDLVKQEETRKQFLSFLQKRVLESFTKNELGIRSYFLGDSVEKWIKESYDLELDIDNCRSELRKFQTFIFSSVRYKLYLDSMKNLPLNPSKKLEGKKHIADVYVIILDESFPAIMFNGGAYSKADFFKILQESETSNSSKTLNTIIAIKSVNTLLSKHFVITTNGDSGEFFSKYNISKINDKNTEYTLKE.

Helical transmembrane passes span 125-145 (VYKVSPFFIIFATASIFTFIL) and 149-169 (IVVIPLIFHFFFPLLIMFFFF).

As to quaternary structure, associates with the mitochondrial ribosome.

The protein resides in the mitochondrion. Its subcellular location is the mitochondrion membrane. Functionally, component of MIOREX complexes, large expressome-like assemblies of ribosomes with factors involved in all the steps of post-transcriptional gene expression. In Saccharomyces cerevisiae (strain ATCC 204508 / S288c) (Baker's yeast), this protein is MIOREX complex component 9.